A 52-amino-acid polypeptide reads, in one-letter code: Phospholamban (52 aa).

Met1 is subject to N-acetylmethionine. Over 1–31 (MEKVQYITRSALRRASTLEVNPQARQRLQEL) the chain is Cytoplasmic. Ser16 is subject to Phosphoserine; by PKA. Residue Thr17 is modified to Phosphothreonine; by CaMK. A helical transmembrane segment spans residues 32–52 (FVNFCLILICLLLICIIVMLL).

The protein belongs to the phospholamban family. Homopentamer. In terms of processing, phosphorylated in response to beta-adrenergic stimulation. Phosphorylation by PKA abolishes the inhibition of ATP2A2-mediated calcium uptake. Heart.

It localises to the endoplasmic reticulum membrane. Its subcellular location is the sarcoplasmic reticulum membrane. The protein localises to the mitochondrion membrane. It is found in the membrane. Functionally, reversibly inhibits the activity of ATP2A2/SERCA2 in cardiac sarcoplasmic reticulum by decreasing the apparent affinity of the ATPase for Ca(2+). Binds preferentially to the ATP-bound E1 conformational form of ATP2A2 which predominates at low Ca(2+) concentrations during the diastolic phase of the cardiac cycle. Inhibits ATP2A2 Ca(2+) affinity by disrupting its allosteric activation by ATP. Modulates the contractility of the heart muscle in response to physiological stimuli via its effects on ATP2A2. Modulates calcium re-uptake during muscle relaxation and plays an important role in calcium homeostasis in the heart muscle. The degree of ATP2A2 inhibition depends on the oligomeric state of PLN. ATP2A2 inhibition is alleviated by PLN phosphorylation. The polypeptide is Phospholamban (PLN) (Gallus gallus (Chicken)).